We begin with the raw amino-acid sequence, 263 residues long: MESRNSYENKIDEISSLSESKEHPIDIQEKKDAFVNEFKGVLFDKNTRSSELLFNFYECCYKFLPRAQPQDKIDSYNSALQAFSIFCSSTLTHNNIGFDFKLFPEVKLSGEHLETVFKYKNGDDVREIAKINITLQKEEGGLYNLRGLDFKGCFFSGQNFSNYDIQYVNWGTSLFDVDTPCIFNAPAYNKSNEKSLKPVSENGLSGVLTDRNNKIKLITGVAPFDDILFMDDDFDDSSSEDDPVENSPVVTSPVVSSSKSSFQ.

The segment covering 233-244 (DFDDSSSEDDPV) has biased composition (acidic residues). The interval 233-263 (DFDDSSSEDDPVENSPVVTSPVVSSSKSSFQ) is disordered. Over residues 245 to 263 (ENSPVVTSPVVSSSKSSFQ) the composition is skewed to low complexity.

In Escherichia coli (strain K12), this protein is Protein YpjB (ypjB).